The primary structure comprises 28 residues: Cycloviolin-B (28 aa).

The cyclopeptide (Gly-Asn) cross-link spans 1–28 (GTACGESCYVLPCFTVGCTCTSSQCFKN). Disulfide bonds link Cys4–Cys18, Cys8–Cys20, and Cys13–Cys25.

Post-translationally, this is a cyclic peptide.

In terms of biological role, probably participates in a plant defense mechanism. Has anti-HIV activity. This chain is Cycloviolin-B, found in Leonia cymosa (Sacha uba).